The primary structure comprises 478 residues: Proline--tRNA ligase (478 aa).

Belongs to the class-II aminoacyl-tRNA synthetase family. ProS type 3 subfamily. In terms of assembly, homodimer.

It is found in the cytoplasm. It carries out the reaction tRNA(Pro) + L-proline + ATP = L-prolyl-tRNA(Pro) + AMP + diphosphate. Its function is as follows. Catalyzes the attachment of proline to tRNA(Pro) in a two-step reaction: proline is first activated by ATP to form Pro-AMP and then transferred to the acceptor end of tRNA(Pro). This is Proline--tRNA ligase from Clostridium botulinum (strain Langeland / NCTC 10281 / Type F).